Here is a 994-residue protein sequence, read N- to C-terminus: Zinc finger protein basonuclin-1 (994 aa).

The disordered stretch occupies residues Met-1–Arg-29. The hydrophobic stretch occupies residues Met-240–Phe-249. C2H2-type zinc fingers lie at residues Val-357–His-380 and His-385–His-414. 2 disordered regions span residues Arg-402–Asp-425 and Thr-444–Ile-472. The Nuclear localization signal signature appears at Pro-533–Lys-539. Phosphoserine occurs at positions 537 and 541. The tract at residues Asn-555 to Thr-639 is disordered. The span at Ser-563–Glu-578 shows a compositional bias: acidic residues. Residues Pro-603–Val-614 are compositionally biased toward basic and acidic residues. Positions Ile-615–His-630 are enriched in polar residues. 2 consecutive C2H2-type zinc fingers follow at residues Phe-720–His-743 and His-748–His-775. The span at Ser-859–Asp-877 shows a compositional bias: low complexity. Residues Ser-859–Glu-881 are disordered. 2 C2H2-type zinc fingers span residues Ile-928 to His-951 and His-956 to His-983. The segment at Val-970 to Gln-994 is disordered.

In terms of assembly, interacts with HSF2BP (via C-terminus). In terms of processing, phosphorylation on Ser-537 and Ser-541 leads to cytoplasmic localization. As to expression, in epidermis, primarily detected in cells of the basal or immediately suprabasal layers (at protein level). In hair follicles, mainly expressed in the outer root sheath (at protein level). Expressed in epidermis, testis and foreskin, and to a lower extent in thymus, spleen, mammary glands, placenta, brain and heart. Expressed in the ovary, notably in oocytes.

Its subcellular location is the nucleus. The protein resides in the cytoplasm. It is found in the nucleoplasm. Its function is as follows. Transcriptional activator. It is likely involved in the regulation of keratinocytes terminal differentiation in squamous epithelia and hair follicles. Required for the maintenance of spermatogenesis. It is involved in the positive regulation of oocyte maturation, probably acting through the control of BMP15 levels and regulation of AKT signaling cascade. May also play a role in the early development of embryos. This is Zinc finger protein basonuclin-1 (BNC1) from Homo sapiens (Human).